The primary structure comprises 251 residues: Triosephosphate isomerase (251 aa).

Residue 9–11 coordinates substrate; sequence NWK. His-96 (electrophile) is an active-site residue. The Proton acceptor role is filled by Glu-166. Residues Gly-172, Ser-212, and 233 to 234 contribute to the substrate site; that span reads GG.

Belongs to the triosephosphate isomerase family. In terms of assembly, homodimer.

Its subcellular location is the cytoplasm. The enzyme catalyses D-glyceraldehyde 3-phosphate = dihydroxyacetone phosphate. It functions in the pathway carbohydrate biosynthesis; gluconeogenesis. The protein operates within carbohydrate degradation; glycolysis; D-glyceraldehyde 3-phosphate from glycerone phosphate: step 1/1. Its function is as follows. Involved in the gluconeogenesis. Catalyzes stereospecifically the conversion of dihydroxyacetone phosphate (DHAP) to D-glyceraldehyde-3-phosphate (G3P). This Pelodictyon phaeoclathratiforme (strain DSM 5477 / BU-1) protein is Triosephosphate isomerase.